The primary structure comprises 37 residues: uncharacterized protein (37 aa).

The tract at residues M1–F37 is disordered. Basic residues predominate over residues R23–F37.

This is an uncharacterized protein from Bacillus phage phi105 (Bacteriophage phi-105).